A 120-amino-acid chain; its full sequence is NAD(P)H-quinone oxidoreductase subunit 3, chloroplastic (120 aa).

A run of 3 helical transmembrane segments spans residues 9–29, 64–84, and 88–108; these read IFWAFLIISSIIPILAFLISG, MFALVFVVFDVETVFLYPWAM, and VLGVSVFIEALIFVLIPIVGL.

The protein belongs to the complex I subunit 3 family. NDH is composed of at least 16 different subunits, 5 of which are encoded in the nucleus.

The protein resides in the plastid. It is found in the chloroplast thylakoid membrane. The enzyme catalyses a plastoquinone + NADH + (n+1) H(+)(in) = a plastoquinol + NAD(+) + n H(+)(out). The catalysed reaction is a plastoquinone + NADPH + (n+1) H(+)(in) = a plastoquinol + NADP(+) + n H(+)(out). NDH shuttles electrons from NAD(P)H:plastoquinone, via FMN and iron-sulfur (Fe-S) centers, to quinones in the photosynthetic chain and possibly in a chloroplast respiratory chain. The immediate electron acceptor for the enzyme in this species is believed to be plastoquinone. Couples the redox reaction to proton translocation, and thus conserves the redox energy in a proton gradient. This chain is NAD(P)H-quinone oxidoreductase subunit 3, chloroplastic, found in Ceratophyllum demersum (Rigid hornwort).